An 81-amino-acid polypeptide reads, in one-letter code: Small ribosomal subunit protein bS16 (81 aa).

It belongs to the bacterial ribosomal protein bS16 family.

The polypeptide is Small ribosomal subunit protein bS16 (Clostridium perfringens (strain ATCC 13124 / DSM 756 / JCM 1290 / NCIMB 6125 / NCTC 8237 / Type A)).